Consider the following 393-residue polypeptide: DNA-directed RNA polymerase subunit Rpo1C (393 aa).

The protein belongs to the RNA polymerase beta' chain family. In terms of assembly, part of the 13-subunit RNA polymerase complex. Interacts with TFS4.

It is found in the cytoplasm. It carries out the reaction RNA(n) + a ribonucleoside 5'-triphosphate = RNA(n+1) + diphosphate. DNA-dependent RNA polymerase (RNAP) catalyzes the transcription of DNA into RNA using the four ribonucleoside triphosphates as substrates. Forms part of the jaw domain. In terms of biological role, reconstitution experiments show this subunit is required for basic activity. This Sulfolobus acidocaldarius (strain ATCC 33909 / DSM 639 / JCM 8929 / NBRC 15157 / NCIMB 11770) protein is DNA-directed RNA polymerase subunit Rpo1C.